A 321-amino-acid chain; its full sequence is Transaldolase (321 aa).

Lys-132 (schiff-base intermediate with substrate) is an active-site residue.

This sequence belongs to the transaldolase family. Type 1 subfamily. In terms of assembly, homodimer.

It is found in the cytoplasm. It carries out the reaction D-sedoheptulose 7-phosphate + D-glyceraldehyde 3-phosphate = D-erythrose 4-phosphate + beta-D-fructose 6-phosphate. Its pathway is carbohydrate degradation; pentose phosphate pathway; D-glyceraldehyde 3-phosphate and beta-D-fructose 6-phosphate from D-ribose 5-phosphate and D-xylulose 5-phosphate (non-oxidative stage): step 2/3. In terms of biological role, transaldolase is important for the balance of metabolites in the pentose-phosphate pathway. The protein is Transaldolase of Marinobacter nauticus (strain ATCC 700491 / DSM 11845 / VT8) (Marinobacter aquaeolei).